We begin with the raw amino-acid sequence, 131 residues long: Glycine cleavage system H protein (131 aa).

The Lipoyl-binding domain occupies 24-106; it reads RAIVGISDHA…YGEGWIMVIE (83 aa). Lys65 carries the N6-lipoyllysine modification.

Belongs to the GcvH family. In terms of assembly, the glycine cleavage system is composed of four proteins: P, T, L and H. The cofactor is (R)-lipoate.

The glycine cleavage system catalyzes the degradation of glycine. The H protein shuttles the methylamine group of glycine from the P protein to the T protein. The sequence is that of Glycine cleavage system H protein from Xylella fastidiosa (strain M12).